Reading from the N-terminus, the 53-residue chain is UPF0391 membrane protein Meso_3392 (53 aa).

2 helical membrane-spanning segments follow: residues Trp4–Ala24 and Ile33–Ala53.

It belongs to the UPF0391 family.

It is found in the cell membrane. This is UPF0391 membrane protein Meso_3392 from Chelativorans sp. (strain BNC1).